The following is a 262-amino-acid chain: Ribosome-recycling factor, mitochondrial (262 aa).

A mitochondrion-targeting transit peptide spans 1-55; sequence MALGLRCFRLVHPAFCNSLAALTRPVSEVTLQTVRGRQNDHGQCMAYAAVPVRHF.

It belongs to the RRF family.

It is found in the mitochondrion. In terms of biological role, responsible for the disassembly of ribosomes from messenger RNA at the termination of mitochondrial protein biosynthesis. Acts in collaboration with GFM2. Promotes mitochondrial ribosome recycling by dissolution of intersubunit contacts. In Bos taurus (Bovine), this protein is Ribosome-recycling factor, mitochondrial (MRRF).